The chain runs to 483 residues: Glutamate--tRNA ligase (483 aa).

A 'HIGH' region motif is present at residues 9–19; that stretch reads PSPTGNLHIGT. The short motif at 250-254 is the 'KMSKS' region element; the sequence is KLSKR. K253 provides a ligand contact to ATP.

This sequence belongs to the class-I aminoacyl-tRNA synthetase family. Glutamate--tRNA ligase type 1 subfamily. Monomer.

Its subcellular location is the cytoplasm. The enzyme catalyses tRNA(Glu) + L-glutamate + ATP = L-glutamyl-tRNA(Glu) + AMP + diphosphate. In terms of biological role, catalyzes the attachment of glutamate to tRNA(Glu) in a two-step reaction: glutamate is first activated by ATP to form Glu-AMP and then transferred to the acceptor end of tRNA(Glu). The polypeptide is Glutamate--tRNA ligase (Synechocystis sp. (strain ATCC 27184 / PCC 6803 / Kazusa)).